The primary structure comprises 126 residues: MGKTTQKGHRQKSFYRGVRAEKWAAWWLRCKGFHIAEIRFKTKCGEIDLIARRGNLVLIVEVKARSTLAEAMAAVSRVNERRIEAAADIWLARQKDRALLCVRFDLIAILPWRWPQHIPAFFMSNK.

The protein belongs to the UPF0102 family.

In Bartonella henselae (strain ATCC 49882 / DSM 28221 / CCUG 30454 / Houston 1) (Rochalimaea henselae), this protein is UPF0102 protein BH12350.